A 262-amino-acid polypeptide reads, in one-letter code: Tropinone reductase homolog At2g29310 (262 aa).

13 to 37 (LVTGAASGIGYAIVEELASFGAIIH) is an NADP(+) binding site. Ser146 lines the substrate pocket. Tyr159 acts as the Proton acceptor in catalysis.

Belongs to the short-chain dehydrogenases/reductases (SDR) family. SDR65C subfamily.

This is Tropinone reductase homolog At2g29310 from Arabidopsis thaliana (Mouse-ear cress).